The sequence spans 352 residues: MKGFAMLSIGKVGWIEKEKPAPGPFDAIVRPLAVAPCTSDIHTVFEGAIGERHNMILGHEAVGEVVEVGSEVKDFKPGDRVVVPAITPDWRTSEVQRGYHQHSGGMLAGWKFSNVKDGVFGEFFHVNDADMNLAHLPKEIPLEAAVMIPDMMTTGFHGAELADIELGATVAVLGIGPVGLMAVAGAKLRGAGRIIAVGSRPVCVDAAKYYGATDIVNYKDGPIESQIMNLTEGKGVDAAIIAGGNADIMATAVKIVKPGGTIANVNYFGEGEVLPVPRLEWGCGMAHKTIKGGLCPGGRLRMERLIDLVFYKRVDPSKLVTHVFRGFDNIEKAFMLMKDKPKDLIKPVVILA.

Residues Cys-37, His-59, and Asp-150 each contribute to the Zn(2+) site. NADP(+)-binding positions include 175-178, 198-200, Tyr-218, 265-267, and Lys-340; these read IGPV, GSR, and VNY.

It belongs to the zinc-containing alcohol dehydrogenase family. Homotetramer. Requires Zn(2+) as cofactor.

It carries out the reaction propan-2-ol + NADP(+) = acetone + NADPH + H(+). Functionally, alcohol dehydrogenase with a preference for medium chain secondary alcohols, such as 2-butanol and isopropanol. Has very low activity with primary alcohols, such as ethanol. Under physiological conditions, the enzyme reduces aldehydes and 2-ketones to produce secondary alcohols. Is also active with acetaldehyde and propionaldehyde. The sequence is that of NADP-dependent isopropanol dehydrogenase (adh) from Thermoanaerobacter brockii (Thermoanaerobium brockii).